Consider the following 258-residue polypeptide: MGQKVNPLGFRLGITTDHRSRWFADSTKPGQRYRDYVREDVQIRKLMSTGLERAGISKVEIERTRDRVRVDLHTARPGIVIGRRGAEADRLRSELEKLTGKQVQLNILEVKNPELDAQLVAQGIAEQLASRVAFRRAMRKGMQSAQRAGAKGVRVQCSGRLGGAEMSRSEFYREGRVPLHTLRANIDYGFFEARTTFGRIGVKVWIYKGDMTEREFAREQASAAPRARGRADRPRGRRDEGAAPQQAAAPAATTGTEA.

The KH type-2 domain maps to 43 to 111 (IRKLMSTGLE…QVQLNILEVK (69 aa)). The tract at residues 217–258 (AREQASAAPRARGRADRPRGRRDEGAAPQQAAAPAATTGTEA) is disordered. Residues 229 to 241 (GRADRPRGRRDEG) are compositionally biased toward basic and acidic residues. The span at 242-258 (AAPQQAAAPAATTGTEA) shows a compositional bias: low complexity.

It belongs to the universal ribosomal protein uS3 family. In terms of assembly, part of the 30S ribosomal subunit. Forms a tight complex with proteins S10 and S14.

In terms of biological role, binds the lower part of the 30S subunit head. Binds mRNA in the 70S ribosome, positioning it for translation. The chain is Small ribosomal subunit protein uS3 from Beutenbergia cavernae (strain ATCC BAA-8 / DSM 12333 / CCUG 43141 / JCM 11478 / NBRC 16432 / NCIMB 13614 / HKI 0122).